The following is a 597-amino-acid chain: Coronatine-insensitive protein homolog 1b (597 aa).

The F-box domain maps to 22-64 (SIPEEALHLVLGYVDDPRDREAVSLVCRRWHRIDALTRKHVTV). Arg-92, Arg-353, Tyr-391, Arg-414, and Arg-501 together coordinate jasmonate.

As to quaternary structure, interacts with TIFY10C/JAZ8 in a coronatine-dependent manner. Interacts with TIFY3/JAZ1, TIFY6A/JAZ3, TIFY6B/JAZ4, TIFY10A/JAZ6, TIFY10B/JAZ7, TIFY11A/JAZ9, TIFY11B/JAZ10, TIFY11C/JAZ11 and TIFY11D/JAZ12 in a coronatine-dependent manner. In terms of tissue distribution, expressed in roots, shoots, leaf sheaths and leaf blades.

In terms of biological role, involved in jasmonate (JA) signaling. Required for jasmonate signaling in plant defense responses. Can complement Arabidopsis coi1-1 mutant and restore jasmonate signaling. Component of SCF(COI1) E3 ubiquitin ligase complexes, which may mediate the ubiquitination and subsequent proteasomal degradation of target proteins, including TIFY/JAZ family. The sequence is that of Coronatine-insensitive protein homolog 1b from Oryza sativa subsp. japonica (Rice).